The chain runs to 166 residues: Peptidyl-prolyl cis-trans isomerase-like 1 (166 aa).

The region spanning 10 to 164 (QPPNVYLETS…DDVKIIKAYP (155 aa)) is the PPIase cyclophilin-type domain. Residues 54–65 (HRIIKDFMIQGG), 70–71 (TG), 99–104 (AMANAG), 109–113 (GSQFF), Thr119, and Lys125 each bind cyclosporin A. Ser149 bears the Phosphoserine mark.

This sequence belongs to the cyclophilin-type PPIase family. PPIL1 subfamily. Identified in the spliceosome C complex. Interacts with SNW1/SKIP. Interacts with CDC40/PRP17; this interaction leads to CDC40 isomerization. Interacts with RBM22.

It localises to the nucleus. It catalyses the reaction [protein]-peptidylproline (omega=180) = [protein]-peptidylproline (omega=0). Inhibited by Cyclosporin A. Involved in pre-mRNA splicing as component of the spliceosome. PPIases accelerate the folding of proteins. It catalyzes the cis-trans isomerization of proline imidic peptide bonds in oligopeptides. Catalyzes prolyl peptide bond isomerization in CDC40/PRP17. Plays an important role in embryonic brain development; this function is independent of its isomerase activity. The sequence is that of Peptidyl-prolyl cis-trans isomerase-like 1 (PPIL1) from Bos taurus (Bovine).